The chain runs to 475 residues: Integrator complex subunit 15 (475 aa).

The tract at residues 402-444 (YPHIHPGRPSPLSPHSPHQSTLSSPHSPHTVLTAHPTHPALAP) is disordered. The span at 416–430 (HSPHQSTLSSPHSPH) shows a compositional bias: low complexity.

This sequence belongs to the Integrator subunit 15 family. In terms of assembly, component of the Integrator complex, composed of core subunits INTS1, INTS2, INTS3, INTS4, INTS5, INTS6, INTS7, INTS8, INTS9/RC74, INTS10, INTS11/CPSF3L, INTS12, INTS13, INTS14 and INTS15. The core complex associates with protein phosphatase 2A subunits PPP2CA and PPP2R1A, to form the Integrator-PP2A (INTAC) complex. INTS15 is part of the tail subcomplex, composed of INTS10, INTS13, INTS14 and INTS15.

It localises to the nucleus. The protein resides in the chromosome. Functionally, component of the integrator complex, a multiprotein complex that terminates RNA polymerase II (Pol II) transcription in the promoter-proximal region of genes. The integrator complex provides a quality checkpoint during transcription elongation by driving premature transcription termination of transcripts that are unfavorably configured for transcriptional elongation: the complex terminates transcription by (1) catalyzing dephosphorylation of the C-terminal domain (CTD) of Pol II subunit POLR2A/RPB1 and SUPT5H/SPT5, (2) degrading the exiting nascent RNA transcript via endonuclease activity and (3) promoting the release of Pol II from bound DNA. The integrator complex is also involved in terminating the synthesis of non-coding Pol II transcripts, such as enhancer RNAs (eRNAs), small nuclear RNAs (snRNAs), telomerase RNAs and long non-coding RNAs (lncRNAs). INTS15 is part of the integrator tail module that acts as a platform for the recruitment of transcription factors at promoters. Within the integrator complex, INTS15 is required to bridge different integrator modules. This is Integrator complex subunit 15 (ints15) from Danio rerio (Zebrafish).